A 229-amino-acid polypeptide reads, in one-letter code: MNRKMLQVYFICGTSDCPKGKFLDVLEKALQAGITCFQFREKGEQGLTGADKLLLAKQVQHLCHRYQVPLIINDDVELARAIDADGIHLGQEDLSVVEARQLFPGKIIGLSVGTKEEYLNSPIDLVDYIGSGPVFPTLSKDDASPAIGMDGLKQLRKLNSDIPMVAIGGLSAKDCKEVLQAGADGIAVISAISHAEDPYKATKILVDGMQAMILKFNQVESNKQILKNP.

4-amino-2-methyl-5-(diphosphooxymethyl)pyrimidine-binding positions include 38 to 42 and asparagine 73; that span reads QFREK. The Mg(2+) site is built by aspartate 74 and aspartate 93. Serine 111 is a binding site for 4-amino-2-methyl-5-(diphosphooxymethyl)pyrimidine. 137–139 is a 2-[(2R,5Z)-2-carboxy-4-methylthiazol-5(2H)-ylidene]ethyl phosphate binding site; sequence TLS. Lysine 140 provides a ligand contact to 4-amino-2-methyl-5-(diphosphooxymethyl)pyrimidine. 2-[(2R,5Z)-2-carboxy-4-methylthiazol-5(2H)-ylidene]ethyl phosphate contacts are provided by residues glycine 169 and 189-190; that span reads IS.

This sequence belongs to the thiamine-phosphate synthase family. The cofactor is Mg(2+).

It catalyses the reaction 2-[(2R,5Z)-2-carboxy-4-methylthiazol-5(2H)-ylidene]ethyl phosphate + 4-amino-2-methyl-5-(diphosphooxymethyl)pyrimidine + 2 H(+) = thiamine phosphate + CO2 + diphosphate. The catalysed reaction is 2-(2-carboxy-4-methylthiazol-5-yl)ethyl phosphate + 4-amino-2-methyl-5-(diphosphooxymethyl)pyrimidine + 2 H(+) = thiamine phosphate + CO2 + diphosphate. It carries out the reaction 4-methyl-5-(2-phosphooxyethyl)-thiazole + 4-amino-2-methyl-5-(diphosphooxymethyl)pyrimidine + H(+) = thiamine phosphate + diphosphate. It participates in cofactor biosynthesis; thiamine diphosphate biosynthesis; thiamine phosphate from 4-amino-2-methyl-5-diphosphomethylpyrimidine and 4-methyl-5-(2-phosphoethyl)-thiazole: step 1/1. Condenses 4-methyl-5-(beta-hydroxyethyl)thiazole monophosphate (THZ-P) and 2-methyl-4-amino-5-hydroxymethyl pyrimidine pyrophosphate (HMP-PP) to form thiamine monophosphate (TMP). This is Thiamine-phosphate synthase from Streptococcus suis (strain 98HAH33).